The chain runs to 180 residues: Crossover junction endodeoxyribonuclease RuvC (180 aa).

Residues Asp7, Glu66, and Asp138 contribute to the active site. Mg(2+)-binding residues include Asp7, Glu66, and Asp138.

This sequence belongs to the RuvC family. Homodimer which binds Holliday junction (HJ) DNA. The HJ becomes 2-fold symmetrical on binding to RuvC with unstacked arms; it has a different conformation from HJ DNA in complex with RuvA. In the full resolvosome a probable DNA-RuvA(4)-RuvB(12)-RuvC(2) complex forms which resolves the HJ. Mg(2+) serves as cofactor.

The protein localises to the cytoplasm. It carries out the reaction Endonucleolytic cleavage at a junction such as a reciprocal single-stranded crossover between two homologous DNA duplexes (Holliday junction).. The RuvA-RuvB-RuvC complex processes Holliday junction (HJ) DNA during genetic recombination and DNA repair. Endonuclease that resolves HJ intermediates. Cleaves cruciform DNA by making single-stranded nicks across the HJ at symmetrical positions within the homologous arms, yielding a 5'-phosphate and a 3'-hydroxyl group; requires a central core of homology in the junction. The consensus cleavage sequence is 5'-(A/T)TT(C/G)-3'. Cleavage occurs on the 3'-side of the TT dinucleotide at the point of strand exchange. HJ branch migration catalyzed by RuvA-RuvB allows RuvC to scan DNA until it finds its consensus sequence, where it cleaves and resolves the cruciform DNA. This is Crossover junction endodeoxyribonuclease RuvC from Herminiimonas arsenicoxydans.